A 246-amino-acid polypeptide reads, in one-letter code: UDP-N-acetyl-D-mannosaminuronic acid transferase (246 aa).

It belongs to the glycosyltransferase 26 family.

The catalysed reaction is UDP-N-acetyl-alpha-D-mannosaminouronate + N-acetyl-alpha-D-glucosaminyl-di-trans,octa-cis-undecaprenyl diphosphate = beta-D-ManNAcA-(1-&gt;4)-alpha-D-GlcNAc-di-trans,octa-cis-undecaprenyl diphosphate + UDP + H(+). The protein operates within bacterial outer membrane biogenesis; enterobacterial common antigen biosynthesis. Catalyzes the synthesis of Und-PP-GlcNAc-ManNAcA (Lipid II), the second lipid-linked intermediate involved in enterobacterial common antigen (ECA) synthesis. The chain is UDP-N-acetyl-D-mannosaminuronic acid transferase from Salmonella arizonae (strain ATCC BAA-731 / CDC346-86 / RSK2980).